The primary structure comprises 508 residues: Enhancer of mRNA-decapping protein 3 (508 aa).

Positions 1–68 (MAMDWLGSIV…ITELKILEIP (68 aa)) constitute a Sm domain. The interval 1 to 79 (MAMDWLGSIV…PGDNQQVGDL (79 aa)) is required for P-body targeting and interaction with DCP1A. A disordered region spans residues 98 to 194 (NGTGKVVKKP…KNKDDECFGD (97 aa)). Serine 131, serine 138, serine 140, and serine 161 each carry phosphoserine. The tract at residues 191–296 (CFGDDIEELP…HKKLLSVAEK (106 aa)) is required for interaction with DDX6. A DFDF domain is found at 192–228 (FGDDIEELPDTDFDFEGNLALFDKAAVFEEIDTYERR). In terms of domain architecture, YjeF N-terminal spans 283–487 (SYELHKKLLS…DIGIPQQVFQ (205 aa)).

This sequence belongs to the EDC3 family. As to quaternary structure, homodimer (via YjeF N-terminal domain). Forms a complex with DCP1A, DCP2, DDX6 and EDC4/HEDLS, within this complex directly interacts with DCP1A and DDX6. Interacts with ZFP36.

The protein resides in the cytoplasm. The protein localises to the P-body. Functionally, binds single-stranded RNA. Involved in the process of mRNA degradation and in the positive regulation of mRNA decapping. This Mus musculus (Mouse) protein is Enhancer of mRNA-decapping protein 3 (Edc3).